The primary structure comprises 328 residues: uncharacterized protein (328 aa).

It belongs to the Gfo/Idh/MocA family.

This is an uncharacterized protein from Escherichia coli (strain K12).